The chain runs to 308 residues: UDP-N-acetylenolpyruvoylglucosamine reductase (308 aa).

The 164-residue stretch at 22-185 (RVGGPADWLF…VEAAFRADAG (164 aa)) folds into the FAD-binding PCMH-type domain. Arg-165 is an active-site residue. Basic and acidic residues predominate over residues 197 to 211 (QIARRDSSQPTRDRS). The disordered stretch occupies residues 197–228 (QIARRDSSQPTRDRSAGSTFRNPAGFSSTGRA). A compositionally biased stretch (polar residues) spans 212–226 (AGSTFRNPAGFSSTG). The active-site Proton donor is Ser-214. The active site involves Glu-296.

This sequence belongs to the MurB family. FAD serves as cofactor.

Its subcellular location is the cytoplasm. The catalysed reaction is UDP-N-acetyl-alpha-D-muramate + NADP(+) = UDP-N-acetyl-3-O-(1-carboxyvinyl)-alpha-D-glucosamine + NADPH + H(+). It functions in the pathway cell wall biogenesis; peptidoglycan biosynthesis. In terms of biological role, cell wall formation. In Cereibacter sphaeroides (strain ATCC 17025 / ATH 2.4.3) (Rhodobacter sphaeroides), this protein is UDP-N-acetylenolpyruvoylglucosamine reductase.